The primary structure comprises 167 residues: NAD(P)H-quinone oxidoreductase subunit I, chloroplastic (167 aa).

2 consecutive 4Fe-4S ferredoxin-type domains span residues 55–84 and 95–124; these read GRIH…VDWK and LNYS…MTEE. [4Fe-4S] cluster contacts are provided by C64, C67, C70, C74, C104, C107, C110, and C114.

This sequence belongs to the complex I 23 kDa subunit family. As to quaternary structure, NDH is composed of at least 16 different subunits, 5 of which are encoded in the nucleus. [4Fe-4S] cluster is required as a cofactor.

It localises to the plastid. The protein localises to the chloroplast thylakoid membrane. It carries out the reaction a plastoquinone + NADH + (n+1) H(+)(in) = a plastoquinol + NAD(+) + n H(+)(out). It catalyses the reaction a plastoquinone + NADPH + (n+1) H(+)(in) = a plastoquinol + NADP(+) + n H(+)(out). In terms of biological role, NDH shuttles electrons from NAD(P)H:plastoquinone, via FMN and iron-sulfur (Fe-S) centers, to quinones in the photosynthetic chain and possibly in a chloroplast respiratory chain. The immediate electron acceptor for the enzyme in this species is believed to be plastoquinone. Couples the redox reaction to proton translocation, and thus conserves the redox energy in a proton gradient. The polypeptide is NAD(P)H-quinone oxidoreductase subunit I, chloroplastic (Aethionema cordifolium (Lebanon stonecress)).